The primary structure comprises 407 residues: 4-hydroxybenzoate polyprenyltransferase, mitochondrial (407 aa).

A mitochondrion-targeting transit peptide spans 1–20 (MAFFGLSRVSRRLLKSSVSV). A run of 6 helical transmembrane segments spans residues 137–157 (IGTW…ADPG), 162–182 (FKYM…GCTI), 210–230 (FQGI…LLQL), 254–274 (FTFW…LLGW), 279–299 (GSIA…WTLV), and 330–350 (LWLT…GFSA).

It belongs to the UbiA prenyltransferase family. Mg(2+) serves as cofactor. Expressed in flowers.

The protein localises to the mitochondrion inner membrane. The catalysed reaction is an all-trans-polyprenyl diphosphate + 4-hydroxybenzoate = a 4-hydroxy-3-(all-trans-polyprenyl)benzoate + diphosphate. It participates in cofactor biosynthesis; ubiquinone biosynthesis. Functionally, catalyzes the prenylation of para-hydroxybenzoate (PHB) with an all-trans polyprenyl group. Mediates the second step in the final reaction sequence of coenzyme Q (CoQ) biosynthesis, which is the condensation of the polyisoprenoid side chain with PHB, generating the first membrane-bound Q intermediate. Required for embryo development. This chain is 4-hydroxybenzoate polyprenyltransferase, mitochondrial, found in Arabidopsis thaliana (Mouse-ear cress).